The primary structure comprises 130 residues: Protein ApaG (130 aa).

The ApaG domain maps to 3 to 127 (KAETRGIMVT…FSLDSPHLRR (125 aa)).

The polypeptide is Protein ApaG (Methylorubrum extorquens (strain CM4 / NCIMB 13688) (Methylobacterium extorquens)).